The sequence spans 530 residues: Bifunctional purine biosynthesis protein PurH (530 aa).

The MGS-like domain maps to 1 to 148 (MNNARPIHRA…KNHKDVAIVV (148 aa)).

It belongs to the PurH family.

The catalysed reaction is (6R)-10-formyltetrahydrofolate + 5-amino-1-(5-phospho-beta-D-ribosyl)imidazole-4-carboxamide = 5-formamido-1-(5-phospho-D-ribosyl)imidazole-4-carboxamide + (6S)-5,6,7,8-tetrahydrofolate. The enzyme catalyses IMP + H2O = 5-formamido-1-(5-phospho-D-ribosyl)imidazole-4-carboxamide. It participates in purine metabolism; IMP biosynthesis via de novo pathway; 5-formamido-1-(5-phospho-D-ribosyl)imidazole-4-carboxamide from 5-amino-1-(5-phospho-D-ribosyl)imidazole-4-carboxamide (10-formyl THF route): step 1/1. Its pathway is purine metabolism; IMP biosynthesis via de novo pathway; IMP from 5-formamido-1-(5-phospho-D-ribosyl)imidazole-4-carboxamide: step 1/1. This chain is Bifunctional purine biosynthesis protein PurH, found in Vibrio cholerae serotype O1 (strain ATCC 39541 / Classical Ogawa 395 / O395).